The following is a 232-amino-acid chain: uncharacterized protein (232 aa).

The segment at 1–46 is disordered; it reads MNAHNMRGPPGDLAKVVPGSRSGWNEGSRCRQADKGDGQCRNGGRD. Positions 28-46 are enriched in basic and acidic residues; sequence SRCRQADKGDGQCRNGGRD.

This is an uncharacterized protein from Rhizobium meliloti (Ensifer meliloti).